A 224-amino-acid chain; its full sequence is (S)-2-haloacid dehalogenase H-109 (224 aa).

The active-site Nucleophile is the Asp-10. Residues 11–12, Arg-41, and 118–119 each bind an (S)-2-haloacid; these read LY and SN. Residues 175-180 are important for catalytic activity; that stretch reads SSNSWD.

Belongs to the HAD-like hydrolase superfamily. S-2-haloalkanoic acid dehalogenase family.

The catalysed reaction is an (S)-2-haloacid + H2O = a (2R)-2-hydroxycarboxylate + a halide anion + H(+). The enzyme catalyses (S)-2-chloropropanoate + H2O = (R)-lactate + chloride + H(+). In terms of biological role, catalyzes the hydrolytic dehalogenation of small (S)-2-haloalkanoic acids to yield the corresponding (R)-2-hydroxyalkanoic acids. Acts on acids of short chain lengths, C(2) to C(4), with inversion of configuration at C-2. Active with 2-halogenated carboxylic acids and converts only the S-isomer (or L-isomer) of 2-chloropropionic acid with inversion of configuration to produce R-lactate (or D-isomer). The sequence is that of (S)-2-haloacid dehalogenase H-109 from Pseudomonas putida (Arthrobacter siderocapsulatus).